The sequence spans 914 residues: MDRGSKRRQVKPLADSLLDALDYDSSDDSDFKVGESSGSEGTGNGSDEEGSKESAAGSESDSDAAAASADEEGIDDLETKDLNQEDDEEEKVKESFSEETSSKETGGSSRSRKKGEKSSDMEPNGSATTEENSAEPKKWNLRRNRPMLDFTTMEELNEMDDYDSEDDNDWRPTQGKKKGKASSGKEKEGSGEEDDDDDDGGSDEEDNEDDNDDDDDDDDEGNDDESSSSDSEEEGKKPKKKAGKNTGAFDEEETNDSHSTSHGKGNEDSLLERPQTWSSQRMEHILICCVCLGDNSEDADEIIQCDNCGVTVHEGCYGVDGESDSIMSSASENSTEPWFCDACKNGVSPSCELCPSQDGIFKETDAGRWVHVVCALYVPGVAFGDIDKLRPVTLTEMNYSKYGAKECSLCEDTRFARTGVCISCDAGMCRSFFHVTCAQREGLLSEAAAEEDIADPFFAYCKQHADRFDRKWKRKNYLALQSYCKVSLQEREKQLTPEAQARITTRLQQYRAKAELSRNTRPQAWVPREKLPRPLTSSASAIRKLMRKAELMGISTDIFPVDTSDISASVDGRRKHKQPALTADFVNYYLERNMRMIQIQDNIVEQKNLKDKLESEQEKLHMEYDKLCESLEDLQNVNGQLRTEGQSIWSMMGGIVGQKLNVPAVLKAPKERKPSKKEGGSPGKSSSLPAMLYSCGICKKNQDQHLLLLCDTCKLHYHLGCLDPPLTRMPKKTKNSYWQCSECDQASSDEADIAMETLPDGTKRSRRQIKGPIKFIPQEMSPEPKKPQVRGTRTRGQKRKRMSICEEEKMEEPLPRERRQRQSTLQKKPKADDTRTECTTCKGPGDNENLVRCDECRLCYHFGCLDPPLKKSPKQTGYGWICQECDTSSSKEEEAQEVEEESVNEETAEQEIPD.

The interval 19-276 (DALDYDSSDD…EDSLLERPQT (258 aa)) is disordered. Low complexity predominate over residues 53–68 (ESAAGSESDSDAAAAS). Basic and acidic residues predominate over residues 90 to 102 (EKVKESFSEETSS). Composition is skewed to acidic residues over residues 155–168 (ELNE…EDDN) and 191–233 (GEED…DSEE). A PHD-type 1 zinc finger spans residues 285–346 (ILICCVCLGD…PWFCDACKNG (62 aa)). Cys-288, Cys-291, Cys-305, Cys-308, His-313, Cys-316, Cys-340, Cys-343, Cys-351, Cys-354, His-371, Cys-374, Cys-407, Cys-410, Cys-424, Cys-429, His-434, Cys-437, Cys-461, and His-464 together coordinate Zn(2+). A C2HC pre-PHD-type zinc finger spans residues 348–381 (SPSCELCPSQDGIFKETDAGRWVHVVCALYVPGV). A PHD-type 2 zinc finger spans residues 405–465 (KECSLCEDTR…PFFAYCKQHA (61 aa)). A coiled-coil region spans residues 596–644 (MIQIQDNIVEQKNLKDKLESEQEKLHMEYDKLCESLEDLQNVNGQLRTE). The PHD-type 3 zinc-finger motif lies at 692–746 (LYSCGICKKNQDQHLLLLCDTCKLHYHLGCLDPPLTRMPKKTKNSYWQCSECDQA). Zn(2+) is bound by residues Cys-695, Cys-698, Cys-710, Cys-713, His-718, Cys-721, Cys-740, and Cys-743. Residues 777-838 (PQEMSPEPKK…PKADDTRTEC (62 aa)) are disordered. Positions 792-802 (TRTRGQKRKRM) are enriched in basic residues. Basic and acidic residues predominate over residues 803-817 (SICEEEKMEEPLPRE). A PHD-type 4 zinc finger spans residues 835–888 (RTECTTCKGPGDNENLVRCDECRLCYHFGCLDPPLKKSPKQTGYGWICQECDTS). The Zn(2+) site is built by Cys-838, Cys-841, Cys-853, Cys-856, His-861, Cys-864, Cys-882, and Cys-885. The segment at 887–914 (TSSSKEEEAQEVEEESVNEETAEQEIPD) is disordered. Over residues 894–914 (EAQEVEEESVNEETAEQEIPD) the composition is skewed to acidic residues.

In terms of assembly, interacts with histone H3.

It localises to the nucleus. Functionally, histone-binding protein. Binds preferentially to unmodified histone H3 but can also bind to a lesser extent to histone H3 trimethylated at 'Lys-9' (H3K9me3) as well as to histone H3 monomethylated at 'Lys-27' (H3K27ac) and trimethylated at 'Lys-27' (H3K27me3). Represses PDGFRA expression, thus playing a role in regulation of mesenchymal cell proliferation. This is PHD finger protein 14 from Danio rerio (Zebrafish).